We begin with the raw amino-acid sequence, 64 residues long: Large ribosomal subunit protein bL35 (64 aa).

This sequence belongs to the bacterial ribosomal protein bL35 family.

The chain is Large ribosomal subunit protein bL35 from Shewanella halifaxensis (strain HAW-EB4).